We begin with the raw amino-acid sequence, 268 residues long: tRNA pseudouridine synthase A (268 aa).

Catalysis depends on aspartate 52, which acts as the Nucleophile. Position 110 (tyrosine 110) interacts with substrate.

It belongs to the tRNA pseudouridine synthase TruA family. As to quaternary structure, homodimer.

It carries out the reaction uridine(38/39/40) in tRNA = pseudouridine(38/39/40) in tRNA. Its function is as follows. Formation of pseudouridine at positions 38, 39 and 40 in the anticodon stem and loop of transfer RNAs. The protein is tRNA pseudouridine synthase A of Prochlorococcus marinus (strain MIT 9515).